Here is a 198-residue protein sequence, read N- to C-terminus: Probable GTP-binding protein EngB (198 aa).

One can recognise an EngB-type G domain in the interval 36-198; sequence SDPQFAFIGR…NLSKLQELLE (163 aa). GTP-binding positions include 44–51, 70–74, 88–91, 155–158, and 182–184; these read GRSNVGKS, GRTQL, DLPG, NKID, and ISA. Mg(2+) contacts are provided by S51 and T72.

This sequence belongs to the TRAFAC class TrmE-Era-EngA-EngB-Septin-like GTPase superfamily. EngB GTPase family. Mg(2+) serves as cofactor.

Functionally, necessary for normal cell division and for the maintenance of normal septation. The protein is Probable GTP-binding protein EngB of Mesomycoplasma hyopneumoniae (strain 7448) (Mycoplasma hyopneumoniae).